A 501-amino-acid polypeptide reads, in one-letter code: Aldehyde dehydrogenase 1A1 (501 aa).

At serine 2 the chain carries N-acetylserine. N6-acetyllysine occurs at positions 91 and 128. NAD(+) is bound by residues 167 to 170 (IPWN), 193 to 196 (KPAE), 226 to 227 (GP), and 246 to 247 (GS). N6-acetyllysine is present on lysine 252. The active-site Proton acceptor is the glutamate 269. 269–271 (ELG) is an NAD(+) binding site. Cysteine 303 serves as the catalytic Nucleophile. The segment at 336–501 (LTPGVSQGPQ…VTIKISQKNS (166 aa)) is mediates interaction with PRMT3. Residue threonine 337 is modified to Phosphothreonine. Residue 349–353 (EQYEK) participates in NAD(+) binding. An N6-acetyllysine mark is found at lysine 353 and lysine 367. 400–402 (EIF) serves as a coordination point for NAD(+). Lysine 410 carries the post-translational modification N6-acetyllysine. The residue at position 413 (serine 413) is a Phosphoserine. 2 positions are modified to N6-acetyllysine: lysine 419 and lysine 495.

It belongs to the aldehyde dehydrogenase family. As to quaternary structure, homotetramer. Interacts with PRMT3; the interaction is direct, inhibits ALDH1A1 aldehyde dehydrogenase activity and is independent of the methyltransferase activity of PRMT3. In terms of processing, the N-terminus is blocked most probably by acetylation.

The protein localises to the cytoplasm. The protein resides in the cytosol. It is found in the cell projection. Its subcellular location is the axon. It carries out the reaction an aldehyde + NAD(+) + H2O = a carboxylate + NADH + 2 H(+). The enzyme catalyses all-trans-retinal + NAD(+) + H2O = all-trans-retinoate + NADH + 2 H(+). It catalyses the reaction 9-cis-retinal + NAD(+) + H2O = 9-cis-retinoate + NADH + 2 H(+). The catalysed reaction is 11-cis-retinal + NAD(+) + H2O = 11-cis-retinoate + NADH + 2 H(+). It carries out the reaction 13-cis-retinal + NAD(+) + H2O = 13-cis-retinoate + NADH + 2 H(+). The enzyme catalyses 3-deoxyglucosone + NAD(+) + H2O = 2-dehydro-3-deoxy-D-gluconate + NADH + 2 H(+). It catalyses the reaction (E)-4-hydroxynon-2-enal + NAD(+) + H2O = (E)-4-hydroxynon-2-enoate + NADH + 2 H(+). The catalysed reaction is malonaldehyde + NAD(+) + H2O = 3-oxopropanoate + NADH + 2 H(+). It carries out the reaction hexanal + NAD(+) + H2O = hexanoate + NADH + 2 H(+). The enzyme catalyses propanal + NAD(+) + H2O = propanoate + NADH + 2 H(+). It catalyses the reaction acetaldehyde + NAD(+) + H2O = acetate + NADH + 2 H(+). The catalysed reaction is benzaldehyde + NAD(+) + H2O = benzoate + NADH + 2 H(+). It carries out the reaction 4-aminobutanal + NAD(+) + H2O = 4-aminobutanoate + NADH + 2 H(+). Its pathway is cofactor metabolism; retinol metabolism. Inhibited by duocarmycin analogs. In terms of biological role, cytosolic dehydrogenase that catalyzes the irreversible oxidation of a wide range of aldehydes to their corresponding carboxylic acid. Functions downstream of retinol dehydrogenases and catalyzes the oxidation of retinaldehyde into retinoic acid, the second step in the oxidation of retinol/vitamin A into retinoic acid. This pathway is crucial to control the levels of retinol and retinoic acid, two important molecules which excess can be teratogenic and cytotoxic. Also oxidizes aldehydes resulting from lipid peroxidation like (E)-4-hydroxynon-2-enal/HNE, malonaldehyde and hexanal that form protein adducts and are highly cytotoxic. By participating for instance to the clearance of (E)-4-hydroxynon-2-enal/HNE in the lens epithelium prevents the formation of HNE-protein adducts and lens opacification. Also functions downstream of fructosamine-3-kinase in the fructosamine degradation pathway by catalyzing the oxidation of 3-deoxyglucosone, the carbohydrate product of fructosamine 3-phosphate decomposition, which is itself a potent glycating agent that may react with lysine and arginine side-chains of proteins. Also has an aminobutyraldehyde dehydrogenase activity and is probably part of an alternative pathway for the biosynthesis of GABA/4-aminobutanoate in midbrain, thereby playing a role in GABAergic synaptic transmission. This Ovis aries (Sheep) protein is Aldehyde dehydrogenase 1A1.